The chain runs to 299 residues: Probable lipid kinase YegS (299 aa).

The region spanning 2-133 (AEFPASLLIL…IDMAQVNKQT (132 aa)) is the DAGKc domain. ATP is bound by residues T40, 66–72 (GDGTINE), and T95. Mg(2+) contacts are provided by L215, D218, and L220. E271 functions as the Proton acceptor in the catalytic mechanism.

Belongs to the diacylglycerol/lipid kinase family. YegS lipid kinase subfamily. Mg(2+) serves as cofactor. Requires Ca(2+) as cofactor.

It is found in the cytoplasm. Functionally, probably phosphorylates lipids; the in vivo substrate is unknown. In Escherichia coli O45:K1 (strain S88 / ExPEC), this protein is Probable lipid kinase YegS.